The sequence spans 311 residues: Heme A synthase (311 aa).

Over 1–6 (MQRFIK) the chain is Cytoplasmic. The chain crosses the membrane as a helical span at residues 7 to 27 (WLAVITSLDLLIVLLGGALVT). Residues 28 to 62 (KTGSGQGCGKSWPLCNGEFVPSNLSMETIIELSHR) are Extracellular-facing. Cys35 and Cys42 are oxidised to a cystine. Residue Glu58 is part of the active site. His61 is a binding site for heme o. The chain crosses the membrane as a helical span at residues 63 to 83 (LTSGSAGILVTLLCILSWKYY). The Cytoplasmic portion of the chain corresponds to 84–91 (KHVRETKT). The helical transmembrane segment at 92 to 112 (LAILSFVFLVAQALMGAAAVV) threads the bilayer. Residues 113-121 (WGQMPAVLA) are Extracellular-facing. A helical membrane pass occupies residues 122–142 (IHFGISLISFASVILLTCLIF). Residue His123 participates in heme o binding. The Cytoplasmic segment spans residues 143 to 159 (EIDQKFDARSLIMDKKM). A helical transmembrane segment spans residues 160-180 (KFHIYGVTIYSYIVVYTGALV). Residues 181–211 (RHERASLACPDFPLCSKNRPMPTQLHEWVQM) are Extracellular-facing. The cysteines at positions 189 and 195 are disulfide-linked. A helical transmembrane segment spans residues 212-232 (GHRVAAMLIFAWILYAMILAI). His213 is a heme b binding site. Topologically, residues 233 to 243 (RHYKQQPVVYW) are cytoplasmic. Residues 244–264 (GWIISFILVTLQAIVGILVVF) form a helical membrane-spanning segment. The Extracellular portion of the chain corresponds to 265–271 (TNASLSM). Residues 272 to 292 (ALLHSLFISCLFAVLCYLVML) form a helical membrane-spanning segment. His275 contacts heme b. The Cytoplasmic segment spans residues 293-311 (GTRSKVNAKEAASTSKQTK).

This sequence belongs to the COX15/CtaA family. Type 1 subfamily. As to quaternary structure, interacts with CtaB. The cofactor is heme b.

It localises to the cell membrane. The enzyme catalyses Fe(II)-heme o + 2 A + H2O = Fe(II)-heme a + 2 AH2. The protein operates within porphyrin-containing compound metabolism; heme A biosynthesis; heme A from heme O: step 1/1. Functionally, catalyzes the conversion of heme O to heme A by two successive hydroxylations of the methyl group at C8. The first hydroxylation forms heme I, the second hydroxylation results in an unstable dihydroxymethyl group, which spontaneously dehydrates, resulting in the formyl group of heme A. This chain is Heme A synthase, found in Bacillus cereus (strain ATCC 10987 / NRS 248).